A 431-amino-acid polypeptide reads, in one-letter code: MPLPDLLPIAPFTRPVRGEVTLPGSKSLTNRALLLAALCDHPVVLTGALFSEDTQLMVAALRRLGLTVFANEPARTLAVSDQASAFQAKAPVDLFVGLAGTAARFLTALCAAAPRGVYRIDGVSQMRKRPMRGLIDALRALGAEVRCTEREGFFPLEIHARGLRGGPVEIDASESSQLLSALLMVAPLARAATQITLTSDVRWTFVEMTFRLMAEFGVRIDHAGSSTTFEMKAGRYSAPSRYAIEPDATAASYFQALPLVVGGTLALPGLRPPGDGLQGDSAFVDVLARVRARAAGQLLEENFHEISDTFLTLAAITPLLAGPTRITGIAHTRQQETDRVAGMARELMQLGQRVVETRGELEIHPQPLRLGETIETYGDHRFAMSFAILGCRDVRGDGRPWLSIRDPACCAKTFPNFFELLATLRQKSLAD.

3-phosphoshikimate is bound by residues Lys-26, Ser-27, and Arg-31. Lys-26 contacts phosphoenolpyruvate. The phosphoenolpyruvate site is built by Gly-100 and Arg-129. 3-phosphoshikimate is bound by residues Ser-175, Ser-176, Gln-177, Asp-308, and Gln-335. Position 177 (Gln-177) interacts with phosphoenolpyruvate. Catalysis depends on Asp-308, which acts as the Proton acceptor. Phosphoenolpyruvate-binding residues include Arg-339, Arg-381, and Lys-412.

The protein belongs to the EPSP synthase family. As to quaternary structure, monomer.

It localises to the cytoplasm. It catalyses the reaction 3-phosphoshikimate + phosphoenolpyruvate = 5-O-(1-carboxyvinyl)-3-phosphoshikimate + phosphate. It participates in metabolic intermediate biosynthesis; chorismate biosynthesis; chorismate from D-erythrose 4-phosphate and phosphoenolpyruvate: step 6/7. Its function is as follows. Catalyzes the transfer of the enolpyruvyl moiety of phosphoenolpyruvate (PEP) to the 5-hydroxyl of shikimate-3-phosphate (S3P) to produce enolpyruvyl shikimate-3-phosphate and inorganic phosphate. The protein is 3-phosphoshikimate 1-carboxyvinyltransferase of Opitutus terrae (strain DSM 11246 / JCM 15787 / PB90-1).